The following is a 287-amino-acid chain: MKVICGSVFLFSLFFQVVLGDYFSSSSGNPNLRTTKVYTVVSGTHLATAESTVSKTITTTKGLPTNAYYNCVPSKYIQSDIPMCAPNQGDRWVKGRKYKVSWDPLYFGVDNLLMVVSYLNDSGLIAATKKVQNSKGEIMLKANKGWLHDDSFQNVTIDLVTISENNMTLLTGPRILLAKDLDSATAAAENAAFYGPRRNIKAAIAVPSVILGLILVALVYYAYRKDTWKIYMAKIRIRRSAPGYGVRRSRRQRMQSRPVAYTSLPADAHFEDSDDEDYYQSQVKKFH.

An N-terminal signal peptide occupies residues 1-20 (MKVICGSVFLFSLFFQVVLG). Topologically, residues 22–201 (YFSSSSGNPN…AFYGPRRNIK (180 aa)) are extracellular. Residues Asn120, Asn154, and Asn166 are each glycosylated (N-linked (GlcNAc...) asparagine). The helical transmembrane segment at 202–222 (AAIAVPSVILGLILVALVYYA) threads the bilayer. Topologically, residues 223-287 (YRKDTWKIYM…YYQSQVKKFH (65 aa)) are cytoplasmic.

It localises to the membrane. This is an uncharacterized protein from Schizosaccharomyces pombe (strain 972 / ATCC 24843) (Fission yeast).